Here is an 856-residue protein sequence, read N- to C-terminus: Inactive rhomboid protein 2 (856 aa).

The tract at residues 1–115 is disordered; that stretch reads MASADKNGGS…PGFRRQASLS (115 aa). At 1 to 409 the chain is on the cytoplasmic side; sequence MASADKNGGS…HRPYFTYWLT (409 aa). The residue at position 90 (Ser-90) is a Phosphoserine. Residues 94–106 are compositionally biased toward basic and acidic residues; sequence PRSRWQESSEKRP. Residues Ser-113 and Ser-117 each carry the phosphoserine modification. Residues 165–184 form a disordered region; the sequence is PSQEAPSFQGTESPKPCKMP. Residues 191 to 271 are involved in interaction with FRMD8; it reads ARGRAFRHPE…GQRCRVVKRS (81 aa). Ser-323, Ser-325, and Ser-328 each carry phosphoserine. The helical transmembrane segment at 410 to 430 threads the bilayer; it reads FVHVIITLLVICTYGIAPVGF. Residues 431-660 lie on the Lumenal side of the membrane; sequence AQHVTTQLVL…PDQFYRLWLS (230 aa). Positions 531-553 are disordered; it reads GPPMDKSDLGQKRTSGAVCHQDP. Residues 661-681 form a helical membrane-spanning segment; it reads LFLHAGVVHCLVSVVFQMTIL. Residues 682–692 lie on the Cytoplasmic side of the membrane; that stretch reads RDLEKLAGWHR. A helical transmembrane segment spans residues 693 to 713; it reads IAIIFILSGITGNLASAIFLP. The Lumenal portion of the chain corresponds to 714–715; that stretch reads YR. Residues 716–736 form a helical membrane-spanning segment; it reads AEVGPAGSQFGLLACLFVELF. The Cytoplasmic segment spans residues 737 to 747; sequence QSWPLLERPWK. The helical transmembrane segment at 748-768 threads the bilayer; it reads AFLNLSAIVLFLFICGLLPWI. The Lumenal portion of the chain corresponds to 769–773; sequence DNIAH. A helical membrane pass occupies residues 774–794; that stretch reads IFGFLSGLLLAFAFLPYITFG. Topologically, residues 795–802 are cytoplasmic; the sequence is TSDKYRKR. A helical membrane pass occupies residues 803 to 823; that stretch reads ALILVSLLAFAGLFAALVLWL. Over 824–856 the chain is Lumenal; that stretch reads YIYPINWPWIEHLTCFPFTSRFCEKYELDQVLH.

Belongs to the peptidase S54 family. Interacts with EGF. Interacts (via cytoplasmic N-terminus) with FRMD8/iTAP; this interaction leads to mutual protein stabilization. Interacts with ADAM17/TACE. In terms of tissue distribution, found in the epidermis and esophageal epithelium.

Its subcellular location is the endoplasmic reticulum membrane. The protein resides in the cell membrane. In terms of biological role, regulates ADAM17 protease, a sheddase of the epidermal growth factor (EGF) receptor ligands and TNF, thereby plays a role in sleep, cell survival, proliferation, migration and inflammation. Does not exhibit any protease activity on its own. The chain is Inactive rhomboid protein 2 (RHBDF2) from Homo sapiens (Human).